Reading from the N-terminus, the 154-residue chain is MHPAHLLVLLGVCVSLLGAARIPPLPLSLDDFSNLITCANRGSRSWLDYAHYGCFCGSGGSGTPVDDLDRCCQVHDNCFGDAEKLPACNYLFSGPYWNPYSYKCNEGEITCTDDNDECAAFICNCDRTAAICFAGATYNDENFMVTIKKKNICQ.

An N-terminal signal peptide occupies residues 1-19 (MHPAHLLVLLGVCVSLLGA). A propeptide spanning residues 20-27 (ARIPPLPL) is cleaved from the precursor. 7 disulfide bridges follow: C38–C104, C54–C153, C56–C72, C71–C132, C78–C125, C88–C118, and C111–C123. Positions 55, 57, and 59 each coordinate Ca(2+). The active site involves H75. D76 contributes to the Ca(2+) binding site. Residue D126 is part of the active site.

This sequence belongs to the phospholipase A2 family. Group I subfamily. D49 sub-subfamily. Monomer. Ca(2+) is required as a cofactor. In terms of tissue distribution, expressed by the venom gland.

It is found in the secreted. The enzyme catalyses a 1,2-diacyl-sn-glycero-3-phosphocholine + H2O = a 1-acyl-sn-glycero-3-phosphocholine + a fatty acid + H(+). Its function is as follows. Snake venom phospholipase A2 (PLA2) that shows moderate enzymatic activity and exhibits procoagulant activity. PLA2 catalyzes the calcium-dependent hydrolysis of the 2-acyl groups in 3-sn-phosphoglycerides. The polypeptide is Acidic phospholipase A2 1 (Pseudonaja textilis (Eastern brown snake)).